Consider the following 1021-residue polypeptide: Ankyrin repeat- and BTB/POZ domain-containing protein 3-A (1021 aa).

The helical transmembrane segment at 160–180 (MVLSWTISVNCITAALSALSL) threads the bilayer. 4 ANK repeats span residues 515–544 (QGMT…DINS), 561–590 (RQGT…NVEG), 599–628 (YTET…DPLI), and 642–671 (GEMN…KDKG). The region spanning 836-902 (SDVTFLVEGK…LYCGGTESLH (67 aa)) is the BTB domain.

The protein localises to the membrane. This is Ankyrin repeat- and BTB/POZ domain-containing protein 3-A (abtb3a) from Danio rerio (Zebrafish).